The primary structure comprises 285 residues: Putative hydrolase DDAH2 (285 aa).

Catalysis depends on His-171, which acts as the Proton donor. Catalysis depends on Cys-276, which acts as the Nucleophile.

The protein belongs to the DDAH family. Post-translationally, phosphorylated by TBK1. Phosphorylation inhibits the translocation into the mitochondrion upon Sendai viral infection.

It is found in the cytoplasm. Its subcellular location is the mitochondrion. In terms of biological role, putative hydrolase with unknown substrate. Does not hydrolyze N(G),N(G)-dimethyl-L-arginine (ADMA) which acts as an inhibitor of NOS. In endothelial cells, induces expression of vascular endothelial growth factor (VEGF) via phosphorylation of the transcription factor SP1 by PKA in a process that is independent of NO and NO synthase. Similarly, enhances pancreatic insulin secretion through SP1-mediated transcriptional up-regulation of secretagogin/SCGN, an insulin vesicle docking protein. Upon viral infection, relocates to mitochondria where it promotes mitochondrial fission through activation of DNM1L leading to the inhibition of innate response activation mediated by MAVS. This chain is Putative hydrolase DDAH2 (DDAH2), found in Bos taurus (Bovine).